The chain runs to 69 residues: uncharacterized protein (69 aa).

The next 2 membrane-spanning stretches (helical) occupy residues 7–29 (LLSG…LGSI) and 44–66 (ALQV…LGLL).

It localises to the cell membrane. This is an uncharacterized protein from Archaeoglobus fulgidus (strain ATCC 49558 / DSM 4304 / JCM 9628 / NBRC 100126 / VC-16).